The primary structure comprises 246 residues: 1-(5-phosphoribosyl)-5-[(5-phosphoribosylamino)methylideneamino] imidazole-4-carboxamide isomerase (246 aa).

Asp7 (proton acceptor) is an active-site residue. The active-site Proton donor is Asp130.

It belongs to the HisA/HisF family.

The protein localises to the cytoplasm. It catalyses the reaction 1-(5-phospho-beta-D-ribosyl)-5-[(5-phospho-beta-D-ribosylamino)methylideneamino]imidazole-4-carboxamide = 5-[(5-phospho-1-deoxy-D-ribulos-1-ylimino)methylamino]-1-(5-phospho-beta-D-ribosyl)imidazole-4-carboxamide. Its pathway is amino-acid biosynthesis; L-histidine biosynthesis; L-histidine from 5-phospho-alpha-D-ribose 1-diphosphate: step 4/9. The protein is 1-(5-phosphoribosyl)-5-[(5-phosphoribosylamino)methylideneamino] imidazole-4-carboxamide isomerase of Sodalis glossinidius (strain morsitans).